The chain runs to 519 residues: Membrane-bound lytic murein transglycosylase F (519 aa).

The signal sequence occupies residues 1–32 (MKKLKLNYLLIGVVTLLLAVALWPAIPWSGKA). Residues 33 to 269 (DNRIAAIQAR…RLEEKYLGHG (237 aa)) are non-LT domain. The segment at 270–519 (NDFDYVDTRS…PNTLSPVSPR (250 aa)) is LT domain. Glu-314 is an active-site residue. The segment at 495–519 (PFSQAGAGGKTHSALPNTLSPVSPR) is disordered. Residues 508-519 (ALPNTLSPVSPR) show a composition bias toward polar residues.

It in the N-terminal section; belongs to the bacterial solute-binding protein 3 family. This sequence in the C-terminal section; belongs to the transglycosylase Slt family.

The protein localises to the cell outer membrane. It carries out the reaction Exolytic cleavage of the (1-&gt;4)-beta-glycosidic linkage between N-acetylmuramic acid (MurNAc) and N-acetylglucosamine (GlcNAc) residues in peptidoglycan, from either the reducing or the non-reducing ends of the peptidoglycan chains, with concomitant formation of a 1,6-anhydrobond in the MurNAc residue.. In terms of biological role, murein-degrading enzyme that degrades murein glycan strands and insoluble, high-molecular weight murein sacculi, with the concomitant formation of a 1,6-anhydromuramoyl product. Lytic transglycosylases (LTs) play an integral role in the metabolism of the peptidoglycan (PG) sacculus. Their lytic action creates space within the PG sacculus to allow for its expansion as well as for the insertion of various structures such as secretion systems and flagella. In Cronobacter sakazakii (strain ATCC BAA-894) (Enterobacter sakazakii), this protein is Membrane-bound lytic murein transglycosylase F.